Here is a 272-residue protein sequence, read N- to C-terminus: MIYIGLPQWSHPKWVRLGITSLEEYARHFNCVEGNTTLYALPKPEVVLRWREQTTDDFRFCFKFPATISHQAALRHCDDLVTEFLTRMSPLAPRIGQYWLQLPATFGPRELPALWHFLDSLPGEFNYGVEVRHPQFFAKGEEEQTLNRGLHQRGVNQVILDSRPVHAARPHSEAIRDAQRKKPKVPVHAVLTATNPLIRFIGSDDMTQNRELFQVWLQKLAQWHQTTTPYLFLHTPDIAQAPELVHTLWEDLRKTLPEIGAVPAIPQQSSLF.

It belongs to the UPF0759 family.

This chain is UPF0759 protein YecE (yecE), found in Escherichia coli O157:H7.